The primary structure comprises 122 residues: Large ribosomal subunit protein uL14 (122 aa).

It belongs to the universal ribosomal protein uL14 family. Part of the 50S ribosomal subunit. Forms a cluster with proteins L3 and L19. In the 70S ribosome, L14 and L19 interact and together make contacts with the 16S rRNA in bridges B5 and B8.

Functionally, binds to 23S rRNA. Forms part of two intersubunit bridges in the 70S ribosome. The polypeptide is Large ribosomal subunit protein uL14 (Clostridium tetani (strain Massachusetts / E88)).